The chain runs to 163 residues: MKVQIKRLHPEAMIPERQTKLASGFDLHVLDAVLPENASDPYYDHFEAIRIFPGERILVRTGIAIQMGEGMEAQVRPRSGLALRHGITLLNSPGTVDADYTGDVGVILINLGDKHVDIRKKDRVAQLVFQPVFHQVELEERESLNETERGDGGFGHTGVNSQP.

Substrate-binding positions include 78 to 80, asparagine 91, and 95 to 97; these read RSG and TVD. Residues 140–151 show a composition bias toward basic and acidic residues; the sequence is ERESLNETERGD. The segment at 140–163 is disordered; sequence ERESLNETERGDGGFGHTGVNSQP.

It belongs to the dUTPase family. The cofactor is Mg(2+).

It catalyses the reaction dUTP + H2O = dUMP + diphosphate + H(+). It participates in pyrimidine metabolism; dUMP biosynthesis; dUMP from dCTP (dUTP route): step 2/2. Its function is as follows. This enzyme is involved in nucleotide metabolism: it produces dUMP, the immediate precursor of thymidine nucleotides and it decreases the intracellular concentration of dUTP so that uracil cannot be incorporated into DNA. The protein is Deoxyuridine 5'-triphosphate nucleotidohydrolase of Heliobacterium modesticaldum (strain ATCC 51547 / Ice1).